Here is a 284-residue protein sequence, read N- to C-terminus: MEAIKKKMQAMKLEKDNAIDRAEIAEQKARDANLRAEKSEEEVRALQKKIQQIENELDQVQEQLSAANTKLEEKEKALQTAEGDVAALNRRIQLIEEDLERSEERLKIATAKLEEASQSADESERMRKMLEHRSITDEERMDGLENQLKEARMMAEDADRKYDEVARKLAMVEADLERAEERAETGESKIVELEEELRVVGNNLKSLEVSEEKAQQREEAYEQQIRIMTAKLKEAEARAEFAERSVQKLQKEVDRLEDELVHEKEKYKSISDELDQTFAELTGY.

Residues 1–284 (MEAIKKKMQA…DQTFAELTGY (284 aa)) are a coiled coil.

This sequence belongs to the tropomyosin family. Homodimer.

Functionally, tropomyosin, in association with the troponin complex, plays a central role in the calcium dependent regulation of muscle contraction. In Dermatophagoides farinae (American house dust mite), this protein is Tropomyosin.